Reading from the N-terminus, the 228-residue chain is L-ribulose-5-phosphate 4-epimerase UlaF (228 aa).

Substrate is bound by residues 26 to 27 (GN), 43 to 44 (SG), and 72 to 73 (SS). Residues Asp-74, His-93, and His-95 each coordinate Zn(2+). The Proton donor/acceptor role is filled by Asp-118. His-167 is a binding site for Zn(2+). Tyr-225 (proton donor/acceptor) is an active-site residue.

Belongs to the aldolase class II family. AraD/FucA subfamily. Zn(2+) is required as a cofactor.

It carries out the reaction L-ribulose 5-phosphate = D-xylulose 5-phosphate. It participates in cofactor degradation; L-ascorbate degradation; D-xylulose 5-phosphate from L-ascorbate: step 4/4. Functionally, catalyzes the isomerization of L-ribulose 5-phosphate to D-xylulose 5-phosphate. Is involved in the anaerobic L-ascorbate utilization. This is L-ribulose-5-phosphate 4-epimerase UlaF from Shigella sonnei (strain Ss046).